A 197-amino-acid chain; its full sequence is CASP-like protein 1B1 (197 aa).

Ala-2 is modified (N-acetylalanine). The Cytoplasmic portion of the chain corresponds to 2-17 (AVSKLTLAATSGKSCK). The helical transmembrane segment at 18 to 38 (ILLGLRLLAFSATLSAAIVMG) threads the bilayer. The Extracellular segment spans residues 39–69 (LNKETKTFIVGKVGNTPIQATFTAKFDHTPA). The chain crosses the membrane as a helical span at residues 70-90 (FVFFVVANAMVSFHNLLMIAL). Residues 91–106 (QIFGGKMEFTGFRLLS) lie on the Cytoplasmic side of the membrane. A helical transmembrane segment spans residues 107-127 (VAILDMLNVTLISAAANAAAF). The Extracellular segment spans residues 128-156 (MAEVGKNGNKHARWDKICDRFATYCDHGA). A helical transmembrane segment spans residues 157–177 (GALIAAFAGVILMLIISAASI). The Cytoplasmic segment spans residues 178–197 (SRLVQPNKCCSTTASPSVVP).

This sequence belongs to the Casparian strip membrane proteins (CASP) family. As to quaternary structure, homodimer and heterodimers.

The protein localises to the cell membrane. The chain is CASP-like protein 1B1 from Arabidopsis thaliana (Mouse-ear cress).